The chain runs to 495 residues: UDP-N-acetylmuramoyl-L-alanyl-D-glutamate--2,6-diaminopimelate ligase (495 aa).

UDP-N-acetyl-alpha-D-muramoyl-L-alanyl-D-glutamate contacts are provided by residues leucine 27, serine 29, and 44-46 (HQA). Position 116–122 (116–122 (GTNGKTT)) interacts with ATP. UDP-N-acetyl-alpha-D-muramoyl-L-alanyl-D-glutamate contacts are provided by residues asparagine 157, 158-159 (TT), serine 185, glutamine 191, and arginine 193. N6-carboxylysine is present on lysine 225. Meso-2,6-diaminopimelate contacts are provided by residues arginine 390, 414–417 (DNPR), glycine 465, and glutamate 469. The Meso-diaminopimelate recognition motif signature appears at 414 to 417 (DNPR).

This sequence belongs to the MurCDEF family. MurE subfamily. Mg(2+) serves as cofactor. Carboxylation is probably crucial for Mg(2+) binding and, consequently, for the gamma-phosphate positioning of ATP.

The protein localises to the cytoplasm. The catalysed reaction is UDP-N-acetyl-alpha-D-muramoyl-L-alanyl-D-glutamate + meso-2,6-diaminopimelate + ATP = UDP-N-acetyl-alpha-D-muramoyl-L-alanyl-gamma-D-glutamyl-meso-2,6-diaminopimelate + ADP + phosphate + H(+). The protein operates within cell wall biogenesis; peptidoglycan biosynthesis. In terms of biological role, catalyzes the addition of meso-diaminopimelic acid to the nucleotide precursor UDP-N-acetylmuramoyl-L-alanyl-D-glutamate (UMAG) in the biosynthesis of bacterial cell-wall peptidoglycan. In Escherichia coli O157:H7, this protein is UDP-N-acetylmuramoyl-L-alanyl-D-glutamate--2,6-diaminopimelate ligase.